The chain runs to 89 residues: Large ribosomal subunit protein bL28 (89 aa).

The protein belongs to the bacterial ribosomal protein bL28 family.

In Chlamydia trachomatis serovar A (strain ATCC VR-571B / DSM 19440 / HAR-13), this protein is Large ribosomal subunit protein bL28.